The following is a 302-amino-acid chain: 4-hydroxy-tetrahydrodipicolinate synthase (302 aa).

Thr-57 contributes to the pyruvate binding site. Residue Tyr-145 is the Proton donor/acceptor of the active site. The active-site Schiff-base intermediate with substrate is Lys-173. Ile-213 provides a ligand contact to pyruvate.

It belongs to the DapA family. Homotetramer; dimer of dimers.

The protein localises to the cytoplasm. It catalyses the reaction L-aspartate 4-semialdehyde + pyruvate = (2S,4S)-4-hydroxy-2,3,4,5-tetrahydrodipicolinate + H2O + H(+). It functions in the pathway amino-acid biosynthesis; L-lysine biosynthesis via DAP pathway; (S)-tetrahydrodipicolinate from L-aspartate: step 3/4. Its function is as follows. Catalyzes the condensation of (S)-aspartate-beta-semialdehyde [(S)-ASA] and pyruvate to 4-hydroxy-tetrahydrodipicolinate (HTPA). The sequence is that of 4-hydroxy-tetrahydrodipicolinate synthase from Mycolicibacterium gilvum (strain PYR-GCK) (Mycobacterium gilvum (strain PYR-GCK)).